The following is a 770-amino-acid chain: Capsid protein (770 aa).

Disordered regions lie at residues 645–682 (QRMQ…QKES) and 697–717 (WEDS…TQTV). A compositionally biased stretch (polar residues) spans 646–656 (RMQQQPTTTDI). The segment covering 666-681 (RDTEVYHSSQEGEQKE) has biased composition (basic and acidic residues). Positions 703 to 717 (EESGSQSSEEETQTV) are enriched in low complexity.

Belongs to the anelloviridae capsid protein family.

The protein localises to the virion. In terms of biological role, self-assembles to form an icosahedral capsid with a T=1 symmetry, about 30 nm in diameter, and consisting of 60 capsid proteins. The capsid encapsulates the genomic DNA. Capsid protein is involved in attachment and entry into the host cell. This chain is Capsid protein, found in Homo sapiens (Human).